Consider the following 346-residue polypeptide: N-acetyl-gamma-glutamyl-phosphate reductase (346 aa).

Cys-150 is a catalytic residue.

The protein belongs to the NAGSA dehydrogenase family. Type 1 subfamily.

Its subcellular location is the cytoplasm. The enzyme catalyses N-acetyl-L-glutamate 5-semialdehyde + phosphate + NADP(+) = N-acetyl-L-glutamyl 5-phosphate + NADPH + H(+). Its pathway is amino-acid biosynthesis; L-arginine biosynthesis; N(2)-acetyl-L-ornithine from L-glutamate: step 3/4. In terms of biological role, catalyzes the NADPH-dependent reduction of N-acetyl-5-glutamyl phosphate to yield N-acetyl-L-glutamate 5-semialdehyde. In Desulforudis audaxviator (strain MP104C), this protein is N-acetyl-gamma-glutamyl-phosphate reductase.